The chain runs to 296 residues: MSDKQINLVIVTGMSGAGKTVAIQSFEDLGYFTVDNMPPALVPKFLELLERTNETQKVALVVDMRSRRFFKEINSILDHIELNANLKLRILFLDATDSELVSRYKETRRSHPLAADGRVLDGIRRERELLVPLKSMSQHVVNTTDLTPRQLRKVISDQFSSESDQASFRIEVMSFGFKYGLPLDADLVFDVRFLPNPYYQVALREQTGLDQAVFDYVMTHQESEAFYNHLLGLIVPILPAYQKEGKSVLTIAIGCTGGQHRSVAFAHRLAQDLTADWPLHESHRDINRRKETVNRS.

ATP is bound at residue 13 to 20 (GMSGAGKT). Residue 63–66 (DMRS) coordinates GTP.

Belongs to the RapZ-like family.

Displays ATPase and GTPase activities. The protein is Nucleotide-binding protein SEQ_0857 of Streptococcus equi subsp. equi (strain 4047).